Consider the following 380-residue polypeptide: Lipid-A-disaccharide synthase (380 aa).

The protein belongs to the LpxB family.

The catalysed reaction is a lipid X + a UDP-2-N,3-O-bis[(3R)-3-hydroxyacyl]-alpha-D-glucosamine = a lipid A disaccharide + UDP + H(+). It participates in bacterial outer membrane biogenesis; LPS lipid A biosynthesis. In terms of biological role, condensation of UDP-2,3-diacylglucosamine and 2,3-diacylglucosamine-1-phosphate to form lipid A disaccharide, a precursor of lipid A, a phosphorylated glycolipid that anchors the lipopolysaccharide to the outer membrane of the cell. In Pseudomonas savastanoi pv. phaseolicola (strain 1448A / Race 6) (Pseudomonas syringae pv. phaseolicola (strain 1448A / Race 6)), this protein is Lipid-A-disaccharide synthase.